Reading from the N-terminus, the 694-residue chain is Zinc finger BED domain-containing protein 5 (694 aa).

A BED-type zinc finger spans residues 109–165; the sequence is RKYDESYLSFGFTYFGNRDAPHAQCVLCKKILSNSSLAPSKLRRHLETKHAAYKDKD. Cys-133, Cys-136, His-153, and His-158 together coordinate Zn(2+).

This is Zinc finger BED domain-containing protein 5 (ZBED5) from Canis lupus familiaris (Dog).